Consider the following 427-residue polypeptide: Glutamyl-tRNA reductase (427 aa).

Substrate is bound by residues 48-51 (TCNR), S99, 104-106 (EDQ), and Q110. Residue C49 is the Nucleophile of the active site. 179-184 (GAGEMG) is an NADP(+) binding site.

It belongs to the glutamyl-tRNA reductase family. As to quaternary structure, homodimer.

It catalyses the reaction (S)-4-amino-5-oxopentanoate + tRNA(Glu) + NADP(+) = L-glutamyl-tRNA(Glu) + NADPH + H(+). Its pathway is porphyrin-containing compound metabolism; protoporphyrin-IX biosynthesis; 5-aminolevulinate from L-glutamyl-tRNA(Glu): step 1/2. Catalyzes the NADPH-dependent reduction of glutamyl-tRNA(Glu) to glutamate 1-semialdehyde (GSA). The polypeptide is Glutamyl-tRNA reductase (Methanocella arvoryzae (strain DSM 22066 / NBRC 105507 / MRE50)).